Here is a 122-residue protein sequence, read N- to C-terminus: Semaphorin-like protein A43 (122 aa).

The Sema domain occupies 1–122 (MIYLYTADNV…RIMYLFYEYH (122 aa)).

The protein belongs to the semaphorin family.

The sequence is that of Semaphorin-like protein A43 (A43R) from Homo sapiens (Human).